A 90-amino-acid polypeptide reads, in one-letter code: MKTAIFTVVLALAVFAVLSFGWEANGKALSEEFTELIHEKEAASETEARECRYFWGECHDHMPCCDWLVCRYKWPITYNICVWNRTFPEK.

A signal peptide spans 1-26 (MKTAIFTVVLALAVFAVLSFGWEANG). A propeptide spanning residues 27 to 50 (KALSEEFTELIHEKEAASETEARE) is cleaved from the precursor. Cystine bridges form between Cys-51-Cys-65, Cys-58-Cys-70, and Cys-64-Cys-81.

Belongs to the neurotoxin 10 (Hwtx-1) family. 13 (Hntx-13) subfamily. In terms of tissue distribution, expressed by the venom gland.

It localises to the secreted. In terms of biological role, ion channel inhibitor. This chain is U7-theraphotoxin-Hhn1a 3, found in Cyriopagopus hainanus (Chinese bird spider).